A 328-amino-acid polypeptide reads, in one-letter code: Methionyl-tRNA formyltransferase (328 aa).

121-124 (SLLP) contributes to the (6S)-5,6,7,8-tetrahydrofolate binding site.

The protein belongs to the Fmt family.

It carries out the reaction L-methionyl-tRNA(fMet) + (6R)-10-formyltetrahydrofolate = N-formyl-L-methionyl-tRNA(fMet) + (6S)-5,6,7,8-tetrahydrofolate + H(+). Functionally, attaches a formyl group to the free amino group of methionyl-tRNA(fMet). The formyl group appears to play a dual role in the initiator identity of N-formylmethionyl-tRNA by promoting its recognition by IF2 and preventing the misappropriation of this tRNA by the elongation apparatus. The polypeptide is Methionyl-tRNA formyltransferase (Burkholderia thailandensis (strain ATCC 700388 / DSM 13276 / CCUG 48851 / CIP 106301 / E264)).